A 661-amino-acid chain; its full sequence is Fusaric acid cluster transcription factor FUB12 (661 aa).

Residues 17-48 (CVPCRTRKIKCNAAVVGLPCGSCVSRECPDEC) constitute a DNA-binding region (zn(2)-C6 fungal-type). 2 disordered regions span residues 57 to 131 (TVKG…RPPG) and 151 to 185 (SAAQ…QLDD). Residues 73 to 98 (PDTNGSILSPRQQQLPTNVSRQTTDS) are compositionally biased toward polar residues. Basic and acidic residues predominate over residues 99–109 (SHSDPVEESIH). Over residues 110–119 (ASHTGSSLRN) the composition is skewed to polar residues. A compositionally biased stretch (basic and acidic residues) spans 120-129 (DTPHSRDRRP).

It localises to the nucleus. In terms of biological role, transcription factor that is involved in the formation of the two Fusaric acid derivatives, dehydrofusaric acid and fusarinolic acid, serving as a detoxification mechanism. This is Fusaric acid cluster transcription factor FUB12 from Gibberella fujikuroi (strain CBS 195.34 / IMI 58289 / NRRL A-6831) (Bakanae and foot rot disease fungus).